Consider the following 448-residue polypeptide: Asparagine--tRNA ligase (448 aa).

The protein belongs to the class-II aminoacyl-tRNA synthetase family. Homodimer.

The protein localises to the cytoplasm. The enzyme catalyses tRNA(Asn) + L-asparagine + ATP = L-asparaginyl-tRNA(Asn) + AMP + diphosphate + H(+). The sequence is that of Asparagine--tRNA ligase from Streptococcus thermophilus (strain CNRZ 1066).